Here is a 333-residue protein sequence, read N- to C-terminus: Plasminogen (333 aa).

Residues 4–83 (CMFGNGKGYR…LFDYCDVPQC (80 aa)) enclose the Kringle 5 domain. 9 disulfide bridges follow: C4–C83, C25–C66, C54–C78, C90–C208, C100–C108, C130–C146, C222–C289, C252–C268, and C279–C307. Positions 104–331 (VVGGCVANPH…FVTWIEGIMR (228 aa)) constitute a Peptidase S1 domain. S120 bears the Phosphoserine mark. Catalysis depends on charge relay system residues H145 and D188. The active-site Charge relay system is the S283.

It belongs to the peptidase S1 family. Plasminogen subfamily. In terms of assembly, interacts with CSPG4 and AMOT. Interacts (via the Kringle domains) with HRG; the interaction tethers PLG to the cell surface and enhances its activation. Interacts (via Kringle 4 domain) with ADA; the interaction stimulates PLG activation when in complex with DPP4. Angiostatin: Interacts with ATP5F1A; the interaction inhibits most of the angiogenic effects of angiostatin.

It is found in the secreted. It carries out the reaction Preferential cleavage: Lys-|-Xaa &gt; Arg-|-Xaa, higher selectivity than trypsin. Converts fibrin into soluble products.. With respect to regulation, converted into plasmin by plasminogen activators, both plasminogen and its activator being bound to fibrin. Activated with urokinase and high concentrations of streptokinase. Its function is as follows. Plasmin dissolves the fibrin of blood clots and acts as a proteolytic factor in a variety of other processes including embryonic development, tissue remodeling, tumor invasion, and inflammation. In ovulation, weakens the walls of the Graafian follicle. It activates the urokinase-type plasminogen activator, collagenases and several complement zymogens, such as C1, C4 and C5. Cleavage of fibronectin and laminin leads to cell detachment and apoptosis. Also cleaves fibrin, thrombospondin and von Willebrand factor. Its role in tissue remodeling and tumor invasion may be modulated by CSPG4. Binds to cells. In Canis lupus familiaris (Dog), this protein is Plasminogen (PLG).